The chain runs to 396 residues: F-box protein At2g21930 (396 aa).

An F-box domain is found at 19 to 65; it reads SGNSVQIPFDLIPEILKRLPVKTLARFLSVSKEYTSIIRNRDFMKSY.

This is F-box protein At2g21930 from Arabidopsis thaliana (Mouse-ear cress).